The sequence spans 677 residues: Testis-specific Y-encoded-like protein 2 (677 aa).

The tract at residues 1-54 (MDRPDEGPPAKTPRLSSSEPRQRDLPPPPPPPLQRLPLPPPQQRPRPQEETEAA) is disordered. Residue Lys11 forms a Glycyl lysine isopeptide (Lys-Gly) (interchain with G-Cter in SUMO2) linkage. At Ser18 the chain carries Phosphoserine. Pro residues predominate over residues 25–44 (LPPPPPPPLQRLPLPPPQQR). Residues Lys158 and Lys160 each participate in a glycyl lysine isopeptide (Lys-Gly) (interchain with G-Cter in SUMO2) cross-link. Positions 175 to 202 (KESVRRRQRRRRRRRKQRKAKESRERSA) are disordered. The segment covering 178–193 (VRRRQRRRRRRRKQRK) has biased composition (basic residues). A Phosphothreonine modification is found at Thr333. The interval 469 to 658 (ANENLCDSEN…EVNSEDSDIQ (190 aa)) is disordered. Residues 484 to 493 (GYNTKITDNK) show a composition bias toward polar residues. Residues 509 to 525 (EKNTYDSEDSNSEKADG) are compositionally biased toward basic and acidic residues. Over residues 526–540 (DNTTLRDNQQVTNIQ) the composition is skewed to polar residues. Acidic residues-rich tracts occupy residues 543 to 581 (SDSDNGDEGSDDEDDDGNEGDNEGSDDDDDDNEGSDDDD) and 606 to 627 (DYEEEVELISEDSVEEEEETSE). Residues 639-650 (DERIYGEERSEV) show a composition bias toward basic and acidic residues. Phosphoserine is present on residues Ser648, Ser652, and Ser655.

Belongs to the nucleosome assembly protein (NAP) family. In terms of assembly, interacts with histones. Interacts with CASK. Part of a complex containing CASK, TBR1 and TSPYL2. Phosphorylation at Thr-333 impairs function on cell proliferation. As to expression, present at high levels in the pituitary gland and at moderate levels in adrenal gland, brain, testis and ovary. In brain, expressed both in mature neurons and progenitor cells (at protein level).

It is found in the nucleus. It localises to the cytoplasm. Functionally, part of the CASK/TBR1/TSPYL2 transcriptional complex which modulates gene expression in response to neuronal synaptic activity, probably by facilitating nucleosome assembly. May inhibit cell proliferation by inducing p53-dependent CDKN1A expression. The sequence is that of Testis-specific Y-encoded-like protein 2 (Tspyl2) from Mus musculus (Mouse).